Reading from the N-terminus, the 62-residue chain is Metallothionein (62 aa).

The residue at position 1 (Met-1) is an N-acetylmethionine. The beta stretch occupies residues 1-30 (MDPQDCKCETGASCSCGTTCSCSNCKCTSC). A divalent metal cation is bound by residues Cys-6, Cys-8, Cys-14, Cys-16, Cys-20, Cys-22, Cys-25, Cys-27, Cys-30, Cys-34, Cys-35, Cys-37, Cys-38, Cys-42, Cys-45, Cys-49, Cys-51, Cys-58, Cys-60, and Cys-61. The alpha stretch occupies residues 31–62 (KKSCCSCCPAECSKCSQGCHCEKGSKKCSCCN).

The protein belongs to the metallothionein superfamily. Type 1 family.

In terms of biological role, metallothioneins have a high content of cysteine residues that bind various heavy metals. This is Metallothionein (mt-a) from Xenopus laevis (African clawed frog).